A 179-amino-acid chain; its full sequence is Signal peptidase complex subunit 3 (179 aa).

Topologically, residues methionine 1–valine 12 are cytoplasmic. Residues alanine 13–leucine 33 form a helical; Signal-anchor for type II membrane protein membrane-spanning segment. The Lumenal segment spans residues aspartate 34–isoleucine 179. Residues asparagine 73 and asparagine 141 are each glycosylated (N-linked (GlcNAc...) asparagine).

The protein belongs to the SPCS3 family. As to quaternary structure, component of the signal peptidase complex (SPC) composed of a catalytic subunit twr/SEC11 and three accessory subunits Spase12/SPCS1, Spase25/SPCS2 and Spase22-23/SPCS3. The complex induces a local thinning of the ER membrane which is used to measure the length of the signal peptide (SP) h-region of protein substrates. This ensures the selectivity of the complex towards h-regions shorter than 18-20 amino acids.

It is found in the endoplasmic reticulum membrane. Its function is as follows. Essential component of the signal peptidase complex (SPC) which catalyzes the cleavage of N-terminal signal sequences from nascent proteins as they are translocated into the lumen of the endoplasmic reticulum. Essential for the SPC catalytic activity, possibly by stabilizing and positioning the active center of the complex close to the lumenal surface. Functionally, (Microbial infection) Plays an important role in infection by flaviviruses such as West Nile virus and Dengue virus type 2. This chain is Signal peptidase complex subunit 3 (Spase22-23), found in Drosophila melanogaster (Fruit fly).